A 373-amino-acid chain; its full sequence is Dof zinc finger protein 3 (373 aa).

The tract at residues 1-23 (MASGGALSPVEEKPTVVKTTKAE) is disordered. Residues 10–23 (VEEKPTVVKTTKAE) show a composition bias toward basic and acidic residues. The Dof-type zinc-finger motif lies at 45–99 (PCCPRCNSIKTKFCYYNNYSMAQPRYFCRECRRYWTQGGSLRNVPVGGGCRKSKR). Cysteine 47, cysteine 50, cysteine 72, and cysteine 75 together coordinate Zn(2+). The tract at residues 297–327 (ALGGADEQQGGGDGGEAVMTKDTGGGASSSA) is disordered.

In terms of assembly, interacts with RISBZ1/BZIP58.

The protein localises to the nucleus. In terms of biological role, transcriptional activator that binds specifically to the DNA consensus core sequence 5'-AAAG-3' also known as prolamin box. Can activate the expression of genes encoding for the seed storage proteins glutelin, prolamin and globulin. Functions synergistically with RISBZ/BZIP58 to positively regulate quantitatively many seed storage proteins. Functions synergistically with RISBZ1/BZIP58 to positively regulate some metabolic enzymes, such as alanine aminotransferase and pyruvate phosphate dikinase, that are expressed in developing seeds. Functions synergistically with RISBZ1/BZIP58 to positively regulate genes that are key players in the development of aleurone layers. Functions synergistically with RISBZ1/BZIP58 to positively regulate the glutelin GLUD-1 gene in endosperm of developing seeds. Can activate the expression of the bifunctional lysine-degrading enzyme, lysine ketoglutarate reductase/saccharopine dehydrogenase (LKR/SDH), one of the key regulators determining free lysine content in plants. In germinating seeds, involved in the gibberellin-mediated activation of the alpha-amylase AMY1.1/AMY1A gene. The sequence is that of Dof zinc finger protein 3 from Oryza sativa subsp. japonica (Rice).